A 33-amino-acid chain; its full sequence is Photosystem II reaction center protein Psb30 (33 aa).

Residues Val5–Leu25 traverse the membrane as a helical segment.

The protein belongs to the Psb30/Ycf12 family. As to quaternary structure, PSII is composed of 1 copy each of membrane proteins PsbA, PsbB, PsbC, PsbD, PsbE, PsbF, PsbH, PsbI, PsbJ, PsbK, PsbL, PsbM, PsbT, PsbX, PsbY, PsbZ, Psb30/Ycf12, peripheral proteins of the oxygen-evolving complex and a large number of cofactors. It forms dimeric complexes.

Its subcellular location is the plastid. The protein resides in the chloroplast thylakoid membrane. A core subunit of photosystem II (PSII), probably helps stabilize the reaction center. The sequence is that of Photosystem II reaction center protein Psb30 from Oltmannsiellopsis viridis (Marine flagellate).